A 125-amino-acid polypeptide reads, in one-letter code: Transmembrane protein 14EP (125 aa).

2 helical membrane-spanning segments follow: residues 9 to 29 (VPLY…GISG) and 81 to 101 (ILTL…LIVS).

Belongs to the TMEM14 family.

The protein localises to the membrane. This is Transmembrane protein 14EP (TMEM14EP) from Homo sapiens (Human).